The sequence spans 1532 residues: Multidrug resistance-associated protein 1 (1532 aa).

Over Met-1–Phe-33 the chain is Extracellular. Asn-19 is a glycosylation site (N-linked (GlcNAc...) asparagine). Residues Gln-34 to Phe-54 form a helical membrane-spanning segment. At Leu-55–Lys-74 the chain is on the cytoplasmic side. A helical transmembrane segment spans residues Thr-75–Glu-95. Over Arg-96–Met-100 the chain is Extracellular. Residues Leu-101–Thr-121 traverse the membrane as a helical segment. Residues Phe-122 to Gln-133 lie on the Cytoplasmic side of the membrane. A helical transmembrane segment spans residues Ser-134 to Arg-154. Topologically, residues Ser-155–Asp-172 are extracellular. Residues Ser-173–Asp-193 traverse the membrane as a helical segment. Topologically, residues Ser-194–Val-317 are cytoplasmic. Residue Tyr-277 is modified to Phosphotyrosine. At Ser-290 the chain carries Phosphoserine. The chain crosses the membrane as a helical span at residues Leu-318 to Leu-338. The ABC transmembrane type-1 1 domain occupies Phe-326–Gln-609. Topologically, residues Met-339–Gly-364 are extracellular. The helical transmembrane segment at Tyr-365–Tyr-385 threads the bilayer. Topologically, residues Phe-386–Tyr-441 are cytoplasmic. Residues Ile-442–Asn-462 traverse the membrane as a helical segment. Residues Leu-463 to Pro-465 are Extracellular-facing. The helical transmembrane segment at Ser-466 to Met-486 threads the bilayer. At Lys-487 to Ala-548 the chain is on the cytoplasmic side. Lys-504 carries the post-translational modification N6-succinyllysine. A helical membrane pass occupies residues Val-549–Phe-569. Topologically, residues Val-570–Asn-591 are extracellular. A helical membrane pass occupies residues Ile-592–Val-612. Over Ser-613–Met-967 the chain is Cytoplasmic. The 225-residue stretch at Ile-645–Thr-869 folds into the ABC transporter 1 domain. Residue Gly-679–Ser-686 participates in ATP binding. Ser-879, Ser-883, Ser-916, and Ser-931 each carry phosphoserine. Residues Lys-968–Ser-988 form a helical membrane-spanning segment. Positions Ser-975–Thr-1257 constitute an ABC transmembrane type-1 2 domain. At Ala-989 to Leu-1026 the chain is on the extracellular side. A helical membrane pass occupies residues Gln-1027–Arg-1047. Residues Arg-1048–Gln-1090 lie on the Cytoplasmic side of the membrane. A helical membrane pass occupies residues Val-1091–Leu-1111. Residue Ala-1112 is a topological domain, extracellular. A helical transmembrane segment spans residues Thr-1113–Phe-1133. The Cytoplasmic portion of the chain corresponds to Tyr-1134 to Leu-1204. The chain crosses the membrane as a helical span at residues Glu-1205–Ser-1225. Residues Leu-1226 to Ser-1227 are Extracellular-facing. The chain crosses the membrane as a helical span at residues Ala-1228–Leu-1248. Residues Val-1249–Val-1532 lie on the Cytoplasmic side of the membrane. The region spanning Val-1294–Asp-1528 is the ABC transporter 2 domain. Residue Gly-1328–Ser-1335 coordinates ATP.

Belongs to the ABC transporter superfamily. ABCC family. Conjugate transporter (TC 3.A.1.208) subfamily. In terms of processing, glycosylated. As to expression, skeletal muscle, brain, heart, spleen, lung and kidney.

The protein localises to the cell membrane. It localises to the basolateral cell membrane. It catalyses the reaction ATP + H2O + xenobioticSide 1 = ADP + phosphate + xenobioticSide 2.. It carries out the reaction an S-substituted glutathione(in) + ATP + H2O = an S-substituted glutathione(out) + ADP + phosphate + H(+). The catalysed reaction is sphing-4-enine 1-phosphate(in) + ATP + H2O = sphing-4-enine 1-phosphate(out) + ADP + phosphate + H(+). The enzyme catalyses leukotriene C4(in) + ATP + H2O = leukotriene C4(out) + ADP + phosphate + H(+). It catalyses the reaction 17beta-estradiol 17-O-(beta-D-glucuronate)(in) + ATP + H2O = 17beta-estradiol 17-O-(beta-D-glucuronate)(out) + ADP + phosphate + H(+). It carries out the reaction daunorubicin(in) + ATP + H2O = daunorubicin(out) + ADP + phosphate + H(+). The catalysed reaction is vincristine(in) + ATP + H2O = vincristine(out) + ADP + phosphate + H(+). The enzyme catalyses 2',3'-cGAMP(in) + ATP + H2O = 2',3'-cGAMP(out) + ADP + phosphate + H(+). It catalyses the reaction S-[(2E,6E,10E)-geranylgeranyl]-L-glutathione(in) + ATP + H2O = S-[(2E,6E,10E)-geranylgeranyl]-L-glutathione(out) + ADP + phosphate + H(+). It carries out the reaction prostaglandin A2-S-(R)-glutathione(in) + ATP + H2O = prostaglandin A2-S-(R)-glutathione(out) + ADP + phosphate + H(+). The catalysed reaction is prostaglandin A2-S-(S)-glutathione(in) + ATP + H2O = prostaglandin A2-S-(S)-glutathione(out) + ADP + phosphate + H(+). With respect to regulation, MK 571 inhibits sphingosine 1-phosphate and leukotriene C4 export. Functionally, mediates export of organic anions and drugs from the cytoplasm. Mediates ATP-dependent transport of glutathione and glutathione conjugates, leukotriene C4, estradiol-17-beta-o-glucuronide, methotrexate, antiviral drugs and other xenobiotics. Confers resistance to anticancer drugs by decreasing accumulation of drug in cells, and by mediating ATP- and GSH-dependent drug export. Hydrolyzes ATP with low efficiency. Catalyzes the export of sphingosine 1-phosphate from mast cells independently of their degranulation. Participates in inflammatory response by allowing export of leukotriene C4 from leukotriene C4-synthesizing cells. Exports S-geranylgeranyl-glutathione (GGG) in lymphoid cells and stromal compartments of lymphoid organs. ABCC1 (via extracellular transport) with GGT5 (via GGG catabolism) establish GGG gradients within lymphoid tissues to position P2RY8-positive lymphocytes at germinal centers in lymphoid follicles and restrict their chemotactic transmigration from blood vessels to the bone marrow parenchyma. Mediates basolateral export of GSH-conjugated R- and S-prostaglandin A2 diastereomers in polarized epithelial cells. In Rattus norvegicus (Rat), this protein is Multidrug resistance-associated protein 1.